The primary structure comprises 327 residues: GMP reductase (327 aa).

C176 (thioimidate intermediate) is an active-site residue. Residue 205–228 (IIADGGIRTHGDIAKSIRFGASMV) participates in NADP(+) binding.

Belongs to the IMPDH/GMPR family. GuaC type 2 subfamily.

The enzyme catalyses IMP + NH4(+) + NADP(+) = GMP + NADPH + 2 H(+). Catalyzes the irreversible NADPH-dependent deamination of GMP to IMP. It functions in the conversion of nucleobase, nucleoside and nucleotide derivatives of G to A nucleotides, and in maintaining the intracellular balance of A and G nucleotides. The protein is GMP reductase of Streptococcus agalactiae serotype V (strain ATCC BAA-611 / 2603 V/R).